Consider the following 406-residue polypeptide: NADH-quinone oxidoreductase subunit D (406 aa).

Belongs to the complex I 49 kDa subunit family. In terms of assembly, NDH-1 is composed of 14 different subunits. Subunits NuoB, C, D, E, F, and G constitute the peripheral sector of the complex.

The protein resides in the cell inner membrane. The enzyme catalyses a quinone + NADH + 5 H(+)(in) = a quinol + NAD(+) + 4 H(+)(out). In terms of biological role, NDH-1 shuttles electrons from NADH, via FMN and iron-sulfur (Fe-S) centers, to quinones in the respiratory chain. The immediate electron acceptor for the enzyme in this species is believed to be ubiquinone. Couples the redox reaction to proton translocation (for every two electrons transferred, four hydrogen ions are translocated across the cytoplasmic membrane), and thus conserves the redox energy in a proton gradient. The chain is NADH-quinone oxidoreductase subunit D from Leptospira biflexa serovar Patoc (strain Patoc 1 / Ames).